Reading from the N-terminus, the 295-residue chain is UDP-3-O-acyl-N-acetylglucosamine deacetylase (295 aa).

Zn(2+) is bound by residues His75, His232, and Asp236. His259 serves as the catalytic Proton donor.

This sequence belongs to the LpxC family. The cofactor is Zn(2+).

The enzyme catalyses a UDP-3-O-[(3R)-3-hydroxyacyl]-N-acetyl-alpha-D-glucosamine + H2O = a UDP-3-O-[(3R)-3-hydroxyacyl]-alpha-D-glucosamine + acetate. The protein operates within glycolipid biosynthesis; lipid IV(A) biosynthesis; lipid IV(A) from (3R)-3-hydroxytetradecanoyl-[acyl-carrier-protein] and UDP-N-acetyl-alpha-D-glucosamine: step 2/6. In terms of biological role, catalyzes the hydrolysis of UDP-3-O-myristoyl-N-acetylglucosamine to form UDP-3-O-myristoylglucosamine and acetate, the committed step in lipid A biosynthesis. This chain is UDP-3-O-acyl-N-acetylglucosamine deacetylase, found in Helicobacter pylori (strain ATCC 700392 / 26695) (Campylobacter pylori).